Consider the following 155-residue polypeptide: Transcriptional regulator MraZ (155 aa).

SpoVT-AbrB domains lie at 7–54 (TYEC…PMEE) and 83–126 (VKTV…DKDK).

Belongs to the MraZ family. As to quaternary structure, forms oligomers.

The protein resides in the cytoplasm. Its subcellular location is the nucleoid. The chain is Transcriptional regulator MraZ from Christiangramia forsetii (strain DSM 17595 / CGMCC 1.15422 / KT0803) (Gramella forsetii).